Here is a 129-residue protein sequence, read N- to C-terminus: Ubiquinol-cytochrome-c reductase complex assembly factor 2 (129 aa).

Residues M1–C13 constitute a mitochondrion transit peptide.

It is found in the mitochondrion matrix. It localises to the mitochondrion nucleoid. The protein localises to the mitochondrion. Required for the assembly of the ubiquinol-cytochrome c reductase complex (mitochondrial respiratory chain complex III or cytochrome b-c1 complex). May play a role in the modulation of respiratory chain activities such as oxygen consumption and ATP production. May be involved in cytochrome b translation and/or stability. This Danio rerio (Zebrafish) protein is Ubiquinol-cytochrome-c reductase complex assembly factor 2 (uqcc2).